A 682-amino-acid chain; its full sequence is Kinesin-like protein KIF2A (682 aa).

Positions 1 to 192 (MVTSLNEDSE…LDYRPLTTSD (192 aa)) are globular. The interval 39-129 (LAPDEEIDPG…GKKDFGLASR (91 aa)) is disordered. Residues 99–115 (IEQSASRQQNGSVSDIS) are compositionally biased toward polar residues. In terms of domain architecture, Kinesin motor spans 198-528 (RICVCVRKRP…LRYANRVKEL (331 aa)). Residue 288–295 (GQTGSGKT) participates in ATP binding. A coiled-coil region spans residues 638 to 673 (QLEAILEKKIDILTELRDKVKSFRAALQEEEHASKQ).

This sequence belongs to the TRAFAC class myosin-kinesin ATPase superfamily. Kinesin family. MCAK/KIF2 subfamily. Interacts with aurka and plk1. Post-translationally, phosphorylation by plk1 promotes location at spindle microtubules and spindle poles, and enhances its microtubule depolymerization activity. In terms of processing, phosphorylation by AURKA interferes with location at spindle microtubules and spindle poles, and inhibits its microtubule depolymerization activity.

The protein resides in the cytoplasm. It localises to the cytoskeleton. It is found in the microtubule organizing center. Its subcellular location is the centrosome. The protein localises to the spindle pole. The protein resides in the spindle. Its function is as follows. Plus end-directed microtubule-dependent motor. May regulate microtubule dynamics during axonal growth. Required for normal progression through mitosis. Required for normal congress of chromosomes at the metaphase plate. Required for normal spindle dynamics during mitosis. Promotes spindle turnover. Implicated in formation of bipolar mitotic spindles Has microtubule depolymerization activity. This chain is Kinesin-like protein KIF2A (kif2a), found in Xenopus laevis (African clawed frog).